The chain runs to 70 residues: uncharacterized protein (70 aa).

Residues valine 4–tyrosine 24 traverse the membrane as a helical segment.

Its subcellular location is the host membrane. This is an uncharacterized protein from Dryophytes versicolor (chameleon treefrog).